Here is a 217-residue protein sequence, read N- to C-terminus: Adenylate kinase (217 aa).

Position 10 to 15 (10 to 15) interacts with ATP; it reads GIGKGT. Residues 30–59 are NMP; it reads ATGDIFRKNFQENTPLGKESKKFINKGLLV. AMP-binding positions include Thr31, Arg36, 57-59, 85-88, and Gln92; these read LLV and GFPR. Positions 126–163 are LID; the sequence is GRRICSHCGKVYHLDNLPPKIEGICDKDQKKLIQREDD. Arg127 lines the ATP pocket. The Zn(2+) site is built by Cys130 and Cys133. 136-137 contacts ATP; the sequence is VY. Positions 150 and 153 each coordinate Zn(2+). AMP-binding residues include Arg160 and Arg171. An ATP-binding site is contributed by Gln199.

Belongs to the adenylate kinase family. Monomer.

The protein localises to the cytoplasm. It catalyses the reaction AMP + ATP = 2 ADP. It participates in purine metabolism; AMP biosynthesis via salvage pathway; AMP from ADP: step 1/1. Its function is as follows. Catalyzes the reversible transfer of the terminal phosphate group between ATP and AMP. Plays an important role in cellular energy homeostasis and in adenine nucleotide metabolism. The chain is Adenylate kinase from Phytoplasma australiense.